The following is a 29-amino-acid chain: Chassatide C1 (29 aa).

Residues 1–29 constitute a cross-link (cyclopeptide (Gly-Asn)); it reads GDACGETCFTGICFTAGCSCNPWPTCTRN. Disulfide bonds link C4-C18, C8-C20, and C13-C26.

In terms of processing, this is a cyclic peptide. Expressed in leaf, fruit, pedical and stem but not in root (at protein level).

In terms of biological role, probably participates in a plant defense mechanism. The sequence is that of Chassatide C1 from Chassalia chartacea (Chassalia curviflora).